Consider the following 510-residue polypeptide: NAD(P)H-quinone oxidoreductase subunit 2 A, chloroplastic (510 aa).

The next 13 membrane-spanning stretches (helical) occupy residues leucine 24 to leucine 44, isoleucine 57 to phenylalanine 77, isoleucine 99 to isoleucine 119, methionine 124 to cysteine 144, leucine 149 to tyrosine 169, tyrosine 183 to glycine 203, proline 227 to alanine 247, tryptophan 295 to isoleucine 315, methionine 323 to aspartate 343, tyrosine 354 to leucine 374, alanine 395 to phenylalanine 415, leucine 418 to leucine 438, and methionine 484 to isoleucine 504.

The protein belongs to the complex I subunit 2 family. In terms of assembly, NDH is composed of at least 16 different subunits, 5 of which are encoded in the nucleus.

The protein resides in the plastid. The protein localises to the chloroplast thylakoid membrane. It carries out the reaction a plastoquinone + NADH + (n+1) H(+)(in) = a plastoquinol + NAD(+) + n H(+)(out). It catalyses the reaction a plastoquinone + NADPH + (n+1) H(+)(in) = a plastoquinol + NADP(+) + n H(+)(out). Functionally, NDH shuttles electrons from NAD(P)H:plastoquinone, via FMN and iron-sulfur (Fe-S) centers, to quinones in the photosynthetic chain and possibly in a chloroplast respiratory chain. The immediate electron acceptor for the enzyme in this species is believed to be plastoquinone. Couples the redox reaction to proton translocation, and thus conserves the redox energy in a proton gradient. This is NAD(P)H-quinone oxidoreductase subunit 2 A, chloroplastic from Carica papaya (Papaya).